A 272-amino-acid polypeptide reads, in one-letter code: Putative phosphoenolpyruvate synthase regulatory protein (272 aa).

152-159 (GVSRCGKT) is an ADP binding site.

Belongs to the pyruvate, phosphate/water dikinase regulatory protein family. PSRP subfamily.

The catalysed reaction is [pyruvate, water dikinase] + ADP = [pyruvate, water dikinase]-phosphate + AMP + H(+). It carries out the reaction [pyruvate, water dikinase]-phosphate + phosphate + H(+) = [pyruvate, water dikinase] + diphosphate. Functionally, bifunctional serine/threonine kinase and phosphorylase involved in the regulation of the phosphoenolpyruvate synthase (PEPS) by catalyzing its phosphorylation/dephosphorylation. This is Putative phosphoenolpyruvate synthase regulatory protein from Pseudomonas putida (strain W619).